The primary structure comprises 352 residues: Anthranilate phosphoribosyltransferase (352 aa).

Residues glycine 96, 99–100, serine 104, 106–109, 124–132, and serine 136 each bind 5-phospho-alpha-D-ribose 1-diphosphate; these read GS, NIST, and KHGNRSVSS. Glycine 96 is an anthranilate binding site. Serine 108 serves as a coordination point for Mg(2+). Position 127 (asparagine 127) interacts with anthranilate. An anthranilate-binding site is contributed by arginine 182. Mg(2+)-binding residues include aspartate 241 and glutamate 242.

The protein belongs to the anthranilate phosphoribosyltransferase family. In terms of assembly, homodimer. The cofactor is Mg(2+).

It carries out the reaction N-(5-phospho-beta-D-ribosyl)anthranilate + diphosphate = 5-phospho-alpha-D-ribose 1-diphosphate + anthranilate. The protein operates within amino-acid biosynthesis; L-tryptophan biosynthesis; L-tryptophan from chorismate: step 2/5. In terms of biological role, catalyzes the transfer of the phosphoribosyl group of 5-phosphorylribose-1-pyrophosphate (PRPP) to anthranilate to yield N-(5'-phosphoribosyl)-anthranilate (PRA). The sequence is that of Anthranilate phosphoribosyltransferase from Syntrophotalea carbinolica (strain DSM 2380 / NBRC 103641 / GraBd1) (Pelobacter carbinolicus).